The primary structure comprises 517 residues: TBC1 domain family member 22A (517 aa).

Position 2 is an N-acetylalanine (Ala2). Residues Arg103 to Ser191 form a disordered region. 3 positions are modified to phosphoserine: Ser132, Ser145, and Ser167. The span at Gln163 to Val174 shows a compositional bias: polar residues. Residues Leu176–Leu190 are compositionally biased toward low complexity. Positions Gly222 to Pro446 constitute a Rab-GAP TBC domain.

As to quaternary structure, homodimer. Interacts with ACBD3 and ARFGEF1. Interacts with YWHAB, YWHAE, YWHAG, YWHAH, YWHAQ and YWHAZ.

May act as a GTPase-activating protein for Rab family protein(s). In Homo sapiens (Human), this protein is TBC1 domain family member 22A (TBC1D22A).